A 420-amino-acid polypeptide reads, in one-letter code: Gamma-glutamyl phosphate reductase (420 aa).

Belongs to the gamma-glutamyl phosphate reductase family.

Its subcellular location is the cytoplasm. It carries out the reaction L-glutamate 5-semialdehyde + phosphate + NADP(+) = L-glutamyl 5-phosphate + NADPH + H(+). It functions in the pathway amino-acid biosynthesis; L-proline biosynthesis; L-glutamate 5-semialdehyde from L-glutamate: step 2/2. In terms of biological role, catalyzes the NADPH-dependent reduction of L-glutamate 5-phosphate into L-glutamate 5-semialdehyde and phosphate. The product spontaneously undergoes cyclization to form 1-pyrroline-5-carboxylate. In Shewanella amazonensis (strain ATCC BAA-1098 / SB2B), this protein is Gamma-glutamyl phosphate reductase.